Consider the following 313-residue polypeptide: Heterogeneous nuclear ribonucleoproteins C1/C2 (313 aa).

An N-acetylalanine modification is found at Ala-2. Glycyl lysine isopeptide (Lys-Gly) (interchain with G-Cter in SUMO2) cross-links involve residues Lys-8, Lys-50, Lys-89, and Lys-94. Residues 16-87 (SRVFIGNLNT…QVLDINLAAE (72 aa)) form the RRM domain. 3 positions are modified to phosphoserine: Ser-113, Ser-115, and Ser-121. Disordered stretches follow at residues 139 to 191 (YPAR…KLKG) and 219 to 313 (EKEQ…EDDS). A Nuclear localization signal motif is present at residues 155–161 (PSKRQRV). Residues Ser-162 and Ser-166 each carry the phosphoserine modification. Low complexity predominate over residues 175-186 (SKSGQRGSSSKS). Lys-176 bears the N6-acetyllysine; alternate mark. Residue Lys-176 forms a Glycyl lysine isopeptide (Lys-Gly) (interchain with G-Cter in SUMO2); alternate linkage. A coiled-coil region spans residues 191 to 226 (GDDLQAIKKELTQIKQKVDSLLESLEKIEKEQSKQA). Lys-224 participates in a covalent cross-link: Glycyl lysine isopeptide (Lys-Gly) (interchain with G-Cter in SUMO2). A phosphoserine mark is found at Ser-229, Ser-231, and Ser-232. A Glycyl lysine isopeptide (Lys-Gly) (interchain with G-Cter in SUMO2) cross-link involves residue Lys-237. Lys-240 is covalently cross-linked (Glycyl lysine isopeptide (Lys-Gly) (interchain with G-Cter in SUMO2); alternate). A Glycyl lysine isopeptide (Lys-Gly) (interchain with G-Cter in SUMO1); alternate cross-link involves residue Lys-240. Phosphoserine is present on residues Ser-241, Ser-246, Ser-247, and Ser-249. The segment covering 250–261 (VKKDETNVKMES) has biased composition (basic and acidic residues). Residues Lys-251 and Lys-252 each participate in a glycyl lysine isopeptide (Lys-Gly) (interchain with G-Cter in SUMO2) cross-link. Residue Lys-258 forms a Glycyl lysine isopeptide (Lys-Gly) (interchain with G-Cter in SUMO2); alternate linkage. Lys-258 participates in a covalent cross-link: Glycyl lysine isopeptide (Lys-Gly) (interchain with G-Cter in SUMO); alternate. A phosphoserine mark is found at Ser-261 and Ser-268. The span at 263–284 (AGADDSAEEGDLLDDDDNEDRG) shows a compositional bias: acidic residues. Residues 285–294 (DDQLELKDDE) are compositionally biased toward basic and acidic residues. A compositionally biased stretch (acidic residues) spans 295 to 313 (KEPEEGEDDRDSANGEDDS). A phosphoserine mark is found at Ser-306 and Ser-313.

It belongs to the RRM HNRPC family. RALY subfamily. As to quaternary structure, tetramer composed of 3 copies of isoform C1 and 1 copy of isoform C2. Assembly of 3 tetramers with bound pre-mRNA gives rise to a 19S complex that interacts with HNRNPA2B1 tetramers. Component of the 40S hnRNP particle. Identified in the spliceosome C complex. Interacts with IGF2BP1. Interacts with DHX9; this interaction is direct, enhanced probably by their concomitant binding to RNA and mediates the attachment to actin filaments. Interacts with PPIA/CYPA. In terms of processing, phosphorylated on Ser-268 and Ser-306 in resting cells. Post-translationally, sumoylated. Sumoylation reduces affinity for mRNA. Ubiquitinated and degraded after nucleo-cytoplasmic transport by YWHAE.

Its subcellular location is the nucleus. Binds pre-mRNA and nucleates the assembly of 40S hnRNP particles. Interacts with poly-U tracts in the 3'-UTR or 5'-UTR of mRNA and modulates the stability and the level of translation of bound mRNA molecules. Single HNRNPC tetramers bind 230-240 nucleotides. Trimers of HNRNPC tetramers bind 700 nucleotides. May play a role in the early steps of spliceosome assembly and pre-mRNA splicing. N6-methyladenosine (m6A) has been shown to alter the local structure in mRNAs and long non-coding RNAs (lncRNAs) via a mechanism named 'm(6)A-switch', facilitating binding of HNRNPC, leading to regulation of mRNA splicing. The chain is Heterogeneous nuclear ribonucleoproteins C1/C2 (Hnrnpc) from Mus musculus (Mouse).